A 190-amino-acid polypeptide reads, in one-letter code: Endoribonuclease YbeY (190 aa).

Residues 1–25 (MSQPRPGHRPDCNGADPDSNFASMT) form a disordered region. Residues His-147, His-151, and His-157 each contribute to the Zn(2+) site.

This sequence belongs to the endoribonuclease YbeY family. The cofactor is Zn(2+).

The protein localises to the cytoplasm. In terms of biological role, single strand-specific metallo-endoribonuclease involved in late-stage 70S ribosome quality control and in maturation of the 3' terminus of the 16S rRNA. The chain is Endoribonuclease YbeY from Rhodopseudomonas palustris (strain ATCC BAA-98 / CGA009).